A 386-amino-acid chain; its full sequence is Protein salvador homolog 1 (386 aa).

Residues Ser-95 and Ser-137 each carry the phosphoserine modification. 2 consecutive WW domains span residues 200–233 and 235–268; these read LPLP…HPLE and EGLP…HPCA. Position 211 is a phosphothreonine (Thr-211). The region spanning 322 to 369 is the SARAH domain; the sequence is ILKWELFQLADLDTYQGMLKLLFMKELEQIVKLYEAYRQALLTELENR. Positions 345 to 374 form a coiled coil; that stretch reads MKELEQIVKLYEAYRQALLTELENRKQRQQ.

Homodimer. Stabilized through interaction with STK3/MST2 or STK4/MST1. Interacts (via SARAH domain) with isoform 1 of NEK2. Interacts with ESR1 only in the presence of STK3/MST2. Interacts with WTIP and AJUBA. In terms of processing, phosphorylated by STK3/MST2 and STK4/MST1. Phosphorylation is not required for SAV1 stability and may increase the number of protein binding sites on the scaffold molecule. As to expression, ubiquitously expressed in adult tissues with the highest level found in testis.

It localises to the nucleus. The protein resides in the cytoplasm. Functionally, regulator of STK3/MST2 and STK4/MST1 in the Hippo signaling pathway which plays a pivotal role in organ size control and tumor suppression by restricting proliferation and promoting apoptosis. The core of this pathway is composed of a kinase cascade wherein STK3/MST2 and STK4/MST1, in complex with its regulatory protein SAV1, phosphorylates and activates LATS1/2 in complex with its regulatory protein MOB1, which in turn phosphorylates and inactivates YAP1 oncoprotein and WWTR1/TAZ. Phosphorylation of YAP1 by LATS1/2 inhibits its translocation into the nucleus to regulate cellular genes important for cell proliferation, cell death, and cell migration. SAV1 is required for STK3/MST2 and STK4/MST1 activation and promotes cell-cycle exit and terminal differentiation in developing epithelial tissues. Plays a role in centrosome disjunction by regulating the localization of NEK2 to centrosomes, and its ability to phosphorylate CROCC and CEP250. In conjunction with STK3/MST2, activates the transcriptional activity of ESR1 through the modulation of its phosphorylation. This Mus musculus (Mouse) protein is Protein salvador homolog 1 (Sav1).